The primary structure comprises 379 residues: Ribosomal RNA large subunit methyltransferase G (379 aa).

This sequence belongs to the methyltransferase superfamily. RlmG family.

It is found in the cytoplasm. The enzyme catalyses guanosine(1835) in 23S rRNA + S-adenosyl-L-methionine = N(2)-methylguanosine(1835) in 23S rRNA + S-adenosyl-L-homocysteine + H(+). Functionally, specifically methylates the guanine in position 1835 (m2G1835) of 23S rRNA. The chain is Ribosomal RNA large subunit methyltransferase G from Pectobacterium atrosepticum (strain SCRI 1043 / ATCC BAA-672) (Erwinia carotovora subsp. atroseptica).